The chain runs to 358 residues: Peptide chain release factor 1 (358 aa).

N5-methylglutamine is present on Q233.

It belongs to the prokaryotic/mitochondrial release factor family. Methylated by PrmC. Methylation increases the termination efficiency of RF1.

The protein localises to the cytoplasm. Its function is as follows. Peptide chain release factor 1 directs the termination of translation in response to the peptide chain termination codons UAG and UAA. The chain is Peptide chain release factor 1 from Listeria monocytogenes serotype 4b (strain CLIP80459).